The chain runs to 182 residues: Early nodulin-like protein 10 (182 aa).

Residues 1 to 20 (MSSVMMCCCLLLLFGLLSEG) form the signal peptide. Residues 21-125 (REILVGGKSN…GEKLRVVVLS (105 aa)) enclose the Phytocyanin domain. Residue N65 is glycosylated (N-linked (GlcNAc...) asparagine). C79 and C113 form a disulfide bridge. N129 and N148 each carry an N-linked (GlcNAc...) asparagine glycan. A lipid anchor (GPI-anchor amidated asparagine) is attached at N157. Positions 158 to 182 (AHIMNKGSLNTAWSLLLLLPLGLLV) are cleaved as a propeptide — removed in mature form.

This sequence belongs to the early nodulin-like (ENODL) family. In terms of tissue distribution, mostly expressed in flowers, and, to a lower extent, in leaves, but barely in seedlings, stems, seeds and roots.

The protein localises to the cell membrane. In terms of biological role, may act as a carbohydrate transporter. The sequence is that of Early nodulin-like protein 10 from Arabidopsis thaliana (Mouse-ear cress).